We begin with the raw amino-acid sequence, 896 residues long: Translation initiation factor IF-2 (896 aa).

Residues alanine 117 to lysine 174 are compositionally biased toward basic and acidic residues. Residues alanine 117 to aspartate 303 are disordered. A compositionally biased stretch (low complexity) spans leucine 175–alanine 195. Basic and acidic residues predominate over residues aspartate 196–valine 227. A compositionally biased stretch (low complexity) spans proline 254–alanine 268. Positions proline 396 to glutamate 563 constitute a tr-type G domain. The tract at residues glycine 405–threonine 412 is G1. GTP is bound at residue glycine 405–threonine 412. Positions glycine 430–histidine 434 are G2. Residues aspartate 451–glycine 454 form a G3 region. GTP contacts are provided by residues aspartate 451–histidine 455 and asparagine 505–aspartate 508. The tract at residues asparagine 505–aspartate 508 is G4. The segment at serine 541 to lysine 543 is G5.

The protein belongs to the TRAFAC class translation factor GTPase superfamily. Classic translation factor GTPase family. IF-2 subfamily.

It localises to the cytoplasm. Its function is as follows. One of the essential components for the initiation of protein synthesis. Protects formylmethionyl-tRNA from spontaneous hydrolysis and promotes its binding to the 30S ribosomal subunits. Also involved in the hydrolysis of GTP during the formation of the 70S ribosomal complex. The protein is Translation initiation factor IF-2 of Shewanella pealeana (strain ATCC 700345 / ANG-SQ1).